The sequence spans 348 residues: NADH-ubiquinone oxidoreductase chain 2 (348 aa).

Helical transmembrane passes span 1-21 (MNPY…TLTF), 25-45 (HWIL…PLMA), 60-80 (FLIQ…NAWI), 99-119 (MFAL…PEVL), 124-144 (LLTG…LIIQ), 151-171 (PLIL…SGLN), 178-197 (ILAY…IQYA), 202-224 (LIAL…VLSA), 239-259 (ILAA…PLTG), 274-294 (DLPA…FFYL), and 326-346 (LTIS…ILML).

This sequence belongs to the complex I subunit 2 family. As to quaternary structure, core subunit of respiratory chain NADH dehydrogenase (Complex I) which is composed of 45 different subunits.

Its subcellular location is the mitochondrion inner membrane. The enzyme catalyses a ubiquinone + NADH + 5 H(+)(in) = a ubiquinol + NAD(+) + 4 H(+)(out). Core subunit of the mitochondrial membrane respiratory chain NADH dehydrogenase (Complex I) which catalyzes electron transfer from NADH through the respiratory chain, using ubiquinone as an electron acceptor. Essential for the catalytic activity and assembly of complex I. The chain is NADH-ubiquinone oxidoreductase chain 2 (mt-nd2) from Danio rerio (Zebrafish).